The chain runs to 241 residues: Probable transcriptional regulatory protein RSc2190 (241 aa).

Belongs to the TACO1 family.

Its subcellular location is the cytoplasm. This is Probable transcriptional regulatory protein RSc2190 from Ralstonia nicotianae (strain ATCC BAA-1114 / GMI1000) (Ralstonia solanacearum).